A 329-amino-acid chain; its full sequence is Sex comb on midleg-like protein 1 (329 aa).

Ser138 and Ser238 each carry phosphoserine. Residues 138–157 (SPTLPVSRRENNSPSNLPRP) are disordered. The SAM domain maps to 258–325 (WSVEAVVLFL…YYIDRLKQGK (68 aa)).

It belongs to the SCM family.

It localises to the nucleus. Its function is as follows. Putative Polycomb group (PcG) protein. PcG proteins act by forming multiprotein complexes, which are required to maintain the transcriptionally repressive state of homeotic genes throughout development. May be involved in spermatogenesis during sexual maturation. In Pan troglodytes (Chimpanzee), this protein is Sex comb on midleg-like protein 1 (SCML1).